Here is a 245-residue protein sequence, read N- to C-terminus: Acetoacetate decarboxylase (245 aa).

Lys-116 (schiff-base intermediate with acetoacetate) is an active-site residue.

Belongs to the ADC family.

It catalyses the reaction acetoacetate + H(+) = acetone + CO2. In terms of biological role, catalyzes the conversion of acetoacetate to acetone and carbon dioxide. The polypeptide is Acetoacetate decarboxylase (Acidiphilium cryptum (strain JF-5)).